A 755-amino-acid chain; its full sequence is MVSHGSSPSLLEALSSDFLACKICLEQLRAPKTLPCLHTYCQDCLAQLADGGRVRCPECRETVPVPPEGVASFKTNFFVNGLLDLVKARACGDLRAGKPACALCPLVGGTSTGGPATARCLDCADDLCQACADGHRCTRQTHTHRVVDLVGYRAGWYDEEARERQAAQCPQHPGEALRFLCQPCSQLLCRECRLDPHLDHPCLPLAEAVRARRPGLEGLLAGVDNNLVELEAARRVEKEALARLREQAARVGTQVEEAAEGVLRALLAQKQEVLGQLRAHVEAAEEAARERLAELEGREQVARAAAAFARRVLSLGREAEILSLEGAIAQRLRQLQGCPWAPGPAPCLLPQLELHPGLLDKNCHLLRLSFEEQQPQKDGGKDGAGTQGGEESQSRREDEPKTERQGGVQPQAGDGAQTPKEEKAQTTREEGAQTLEEDRAQTPHEDGGPQPHRGGRPNKKKKFKGRLKSISREPSPALGPNLDGSGLLPRPIFYCSFPTRMPGDKRSPRITGLCPFGPREILVADEQNRALKRFSLNGDYKGTVPVPEGCSPCSVAALQSAVAFSASARLYLINPNGEVQWRRALSLSQASHAVAALPSGDRVAVSVAGHVEVYNMEGSLATRFIPGGKASRGLRALVFLTTSPQGHFVGSDWQQNSVVICDGLGQVVGEYKGPGLHGCQPGSVSVDKKGYIFLTLREVNKVVILDPKGSLLGDFLTAYHGLEKPRVTTMVDGRYLVVSLSNGTIHIFRVRSPDS.

The RING-type zinc-finger motif lies at Cys21–Arg60. 2 consecutive B box-type zinc fingers follow at residues Lys98 to Leu149 and Arg164 to Leu205. Zn(2+) contacts are provided by Cys169, His172, Cys192, and His197. A coiled-coil region spans residues Leu216–Ser314. Residues Glu371 to Gly484 are disordered. Positions Ser392 to Arg404 are enriched in basic and acidic residues. 2 positions are modified to phosphothreonine: Thr418 and Thr442. The span at Pro419 to Gly447 shows a compositional bias: basic and acidic residues. Positions Arg453–Ser469 are enriched in basic residues. Residue Ser475 is modified to Phosphoserine.

The protein belongs to the TRIM/RBCC family. In terms of assembly, homooligomer. Interacts with STING1. Interacts with TICAM1. (Microbial infection) Preferentially ubiquitinated with 'Lys-48' and 'Lys-11'-linked ubiquitin chains by Salmonella effector SopA leading to proteasomal targeting and degradation. In terms of processing, autoubiquitinated. In terms of tissue distribution, widely expressed (at protein level).

Its subcellular location is the cytoplasm. The catalysed reaction is S-ubiquitinyl-[E2 ubiquitin-conjugating enzyme]-L-cysteine + [acceptor protein]-L-lysine = [E2 ubiquitin-conjugating enzyme]-L-cysteine + N(6)-ubiquitinyl-[acceptor protein]-L-lysine.. It participates in protein modification; protein ubiquitination. Functionally, E3 ubiquitin-protein ligase that plays a key role in innate antiviral immunity by mediating ubiquitination of CGAS and STING1. In response to pathogen- and host-derived double-stranded DNA (dsDNA), targets STING1 to 'Lys-63'-linked ubiquitination, thereby promoting its homodimerization, a step required for the production of type I interferon IFN-beta. Also mediate monoubiquitination of CGAS, thereby promoting CGAS oligomerization and subsequent activation. Promotes also TNFalpha-induced NF-kappa-B signaling by mediating 'Lys-63'-linked ubiquitination TAK1, leading to enhanced interaction between TAK1 and CHUK/IKKalpha. Independently of its E3 ubiquitin ligase activity, positive regulator of TLR3 signaling. Potentiates extracellular double stranded RNA (dsRNA)-induced expression of IFNB1 and interferon-stimulated genes ISG15, IFIT1/ISG56, CXCL10, OASL and CCL5/RANTES. Promotes establishment of an antiviral state by TLR3 ligand and TLR3-mediated chemokine induction following infection by hepatitis C virus. Acts as a restriction factor of Zika virus through direct interaction with the viral RNA via its C-terminal region. The sequence is that of E3 ubiquitin-protein ligase TRIM56 from Homo sapiens (Human).